The sequence spans 2839 residues: Neurofibromin (2839 aa).

Ala-2 carries the post-translational modification N-acetylalanine. Phosphoserine occurs at positions 864 and 876. In terms of domain architecture, Ras-GAP spans 1251-1482 (HLLYQLLWNM…DAARRFFLDI (232 aa)). The region spanning 1580–1738 (EKEEFKALKT…ATLALEEDLK (159 aa)) is the CRAL-TRIO domain. The segment at 1580-1837 (EKEEFKALKT…RTRWELSQPD (258 aa)) is lipid binding. A phosphoserine mark is found at Ser-2188 and Ser-2467. Thr-2514 carries the post-translational modification Phosphothreonine. Ser-2515, Ser-2521, Ser-2523, and Ser-2543 each carry phosphoserine. A Bipartite nuclear localization signal motif is present at residues 2555 to 2571 (KRQEMESGITTPPKMRR). A Phosphothreonine modification is found at Thr-2565. Phosphoserine is present on residues Ser-2597, Ser-2802, and Ser-2817. A disordered region spans residues 2787–2839 (TSQHSPGIDKENVELSPTTGHCNSGRTRHGSASQVQKQRSAGSFKRNSIKKIV). Over residues 2801-2827 (LSPTTGHCNSGRTRHGSASQVQKQRSA) the composition is skewed to polar residues.

In terms of assembly, interacts with HTR6. Interacts with SPRED2. Ubiquitinated by RNF7/RBX2, leading to its degradation. As to expression, detected in brain, peripheral nerve, lung, colon and muscle.

It localises to the nucleus. The protein resides in the nucleolus. The protein localises to the cell membrane. In terms of biological role, stimulates the GTPase activity of Ras. NF1 shows greater affinity for Ras GAP, but lower specific activity. May be a regulator of Ras activity. This Homo sapiens (Human) protein is Neurofibromin (NF1).